We begin with the raw amino-acid sequence, 702 residues long: Elongation factor G (702 aa).

The tr-type G domain maps to 8 to 290; the sequence is SRYRNIGISA…AVIEYLPSPT (283 aa). Residues 17 to 24, 88 to 92, and 142 to 145 contribute to the GTP site; these read AHIDAGKT, DTPGH, and NKMD.

This sequence belongs to the TRAFAC class translation factor GTPase superfamily. Classic translation factor GTPase family. EF-G/EF-2 subfamily.

It localises to the cytoplasm. Functionally, catalyzes the GTP-dependent ribosomal translocation step during translation elongation. During this step, the ribosome changes from the pre-translocational (PRE) to the post-translocational (POST) state as the newly formed A-site-bound peptidyl-tRNA and P-site-bound deacylated tRNA move to the P and E sites, respectively. Catalyzes the coordinated movement of the two tRNA molecules, the mRNA and conformational changes in the ribosome. The sequence is that of Elongation factor G from Edwardsiella ictaluri (strain 93-146).